A 201-amino-acid chain; its full sequence is Protease (201 aa).

Catalysis depends on residues His-55, Asp-72, and Cys-122.

This sequence belongs to the peptidase C5 family. As to quaternary structure, interacts with protease cofactor pVI-C; this interaction is necessary for protease activation.

It is found in the virion. The protein resides in the host nucleus. It carries out the reaction Cleaves proteins of the adenovirus and its host cell at two consensus sites: -Yaa-Xaa-Gly-Gly-|-Xaa- and -Yaa-Xaa-Gly-Xaa-|-Gly- (in which Yaa is Met, Ile or Leu, and Xaa is any amino acid).. With respect to regulation, requires DNA and protease cofactor for maximal activation. Inside nascent virions, becomes partially activated by binding to the viral DNA, allowing it to cleave the cofactor that binds to the protease and fully activates it. Actin, like the viral protease cofactor, seems to act as a cofactor in the cleavage of cytokeratin 18 and of actin itself. Its function is as follows. Cleaves viral precursor proteins (pTP, pIIIa, pVI, pVII, pVIII, and pX) inside newly assembled particles giving rise to mature virions. Protease complexed to its cofactor slides along the viral DNA to specifically locate and cleave the viral precursors. Mature virions have a weakened organization compared to the unmature virions, thereby facilitating subsequent uncoating. Without maturation, the particle lacks infectivity and is unable to uncoat. Late in adenovirus infection, in the cytoplasm, may participate in the cytoskeleton destruction. Cleaves host cell cytoskeletal keratins K7 and K18. The protein is Protease of Bovine adenovirus 4 (BAdV-4).